The chain runs to 1229 residues: Nuclear envelope pore membrane protein POM 121C (1229 aa).

The segment covering 1–10 (MSPAAAAAGA) has biased composition (low complexity). Residues 1 to 24 (MSPAAAAAGAGERRRPIASVRDGR) form a disordered region. The interval 1–40 (MSPAAAAAGAGERRRPIASVRDGRGRGCGGPAGAALLGLS) is cisternal side. The tract at residues 1–398 (MSPAAAAAGA…AITSSYSSTR (398 aa)) is required for targeting to the nucleus and nuclear pore complex. Residues 11-24 (GERRRPIASVRDGR) show a composition bias toward basic and acidic residues. The helical transmembrane segment at 41-61 (LVGLLLYLVPAAAALAWLAVG) threads the bilayer. Residues 62–1229 (TTAAWWGLSR…QARRQHTRKK (1168 aa)) are pore side. Serine 81 carries the phosphoserine modification. 5 disordered regions span residues 90–200 (RTLF…LPDR), 296–507 (KKKK…LGYS), 579–747 (KKMQ…TAPT), 936–966 (PLPSYPGANPQPAFGAAEGQPPGAAKPALTP), and 1202–1229 (PSFSIGAGSKTPGARQRLQARRQHTRKK). The span at 155–166 (ARPAPRSTPPSQ) shows a compositional bias: pro residues. Residues 176 to 189 (PSLPTPLLRPSGRP) are compositionally biased toward low complexity. Residues serine 322, serine 328, serine 348, serine 370, and serine 373 each carry the phosphoserine modification. Polar residues predominate over residues 374 to 400 (LTGAYTSGIPSSSRNAITSSYSSTRGI). Residues 409–422 (PSSSPFSSPASSRS) are compositionally biased toward low complexity. Basic and acidic residues-rich tracts occupy residues 427–439 (RPAKKIREEELCH) and 449–463 (ADKESQGEKAADTTP). Residues 468–479 (NSNSQSTPGSSG) are compositionally biased toward polar residues. Over residues 612 to 629 (PPLGLSQSGPPGLLPSPS) the composition is skewed to low complexity. Polar residues predominate over residues 660–673 (QAETATKPQATSAP). Low complexity-rich tracts occupy residues 689 to 703 (SPSSPAAPAASSASP) and 726 to 747 (SVSATAPSSSSLPTTTSTTAPT). The segment covering 1219 to 1229 (LQARRQHTRKK) has biased composition (basic residues).

It belongs to the POM121 family.

Its subcellular location is the nucleus. It is found in the nuclear pore complex. It localises to the nucleus membrane. The protein resides in the endoplasmic reticulum membrane. Essential component of the nuclear pore complex (NPC). The repeat-containing domain may be involved in anchoring components of the pore complex to the pore membrane. When overexpressed in cells induces the formation of cytoplasmic annulate lamellae (AL). In Homo sapiens (Human), this protein is Nuclear envelope pore membrane protein POM 121C (POM121C).